Consider the following 222-residue polypeptide: Protein-L-isoaspartate O-methyltransferase (222 aa).

The active site involves S72.

The protein belongs to the methyltransferase superfamily. L-isoaspartyl/D-aspartyl protein methyltransferase family.

The protein resides in the cytoplasm. The catalysed reaction is [protein]-L-isoaspartate + S-adenosyl-L-methionine = [protein]-L-isoaspartate alpha-methyl ester + S-adenosyl-L-homocysteine. Its function is as follows. Catalyzes the methyl esterification of L-isoaspartyl residues in peptides and proteins that result from spontaneous decomposition of normal L-aspartyl and L-asparaginyl residues. It plays a role in the repair and/or degradation of damaged proteins. The protein is Protein-L-isoaspartate O-methyltransferase of Picosynechococcus sp. (strain ATCC 27264 / PCC 7002 / PR-6) (Agmenellum quadruplicatum).